Here is a 1551-residue protein sequence, read N- to C-terminus: MAVYSAVAWILLFGVLASLGAQNPVSWEVQRFDGWYNNLMEHRWGSKGSRLQRLVPASYADGVYQPLREPYLPNPRHLSNRVMRGPAGQPSLRNRTVLGVFFGYHVLSDLVSVETPGCPAEFLNIYIPRGDPVFDPDKRGNVVLPFQRSRWDRSTGQSPSNPRDLTNQVTGWLDGSAIYGSSHSWSDTLRSFSGGQLASGPDPAFPRNSQNSLLMWMAPDPATGQGGPQGLYAFGAQRGNREPFLQALGLLWFRYHNLCAKRLAQEHPHWGDEELFQHARKRVIATYQNIAMYEWLPSFLKQTPPEYPGYHPFLDPSISPEFVVASEQFLSTMVPPGVYMRNASCHFQGIANRNSSVSGALRVCNSYWSRENPKLQRAEDVDALLLGMASQIAEREDHLVVEDVQDFWPGPLKFSRTDYLASCLQRGRDLGLPSYTKAREALGLPPVSHWQDINPALSRSNGTVLEATAALYNQDLSRLELLAGGLLESHGDPGPLFSAIVLDQFVRLRDGDRYWFENNRNGLFSKEEIAEIRNTSLRDILVAVTNVDPSALQPSVFFWLAGDPCPQPSQLSTQGLPACAPLFVRDYFKGSGFGFGLTIGTLCCFPLVSLLSAWIVARLRMRNFKRLQRQDRQSIMCEKLVGGVEALEWQGRKEPCRPVLVHLQPGQIRVVDGRLTVLRTIQLRPPQQVNLILSSNRGRRTLLLKIPKEYDLVLLFNMEEERQALVENIRAALKENGLSFQEWELREQELMRAAVTRQQRGHLLETFFRHLFSQVLDINQADAGTLPLDSSTKVREALTCELSRAEFADSLGLKPQDMFVESMFSLADKDGNGYLSFREFLDILVVFMKGSPEEKSRLMFRMYDFDGNGLISKDEFIRMLRSFIEISNNCLSKDQLAEVVESMFRESGFQDKEELTWEDFHFMLRDHDSDLRFTQLCVKGVEVPEVIKNLCRRASYISQEKICPSPRMSAHCARNNTKTASSPQRLQCPVDTDPPQEIRRRFGKKVTSFQPLLFTEAHREKFQRSRRHQTVQQFKRFIENYRRHIGCVAVFYTITGALFLERAYYYAFAAHHSGITDTTRVGIILSRGTAASISFMFSYILLTMCRNLITFLRETFLNRYIPFDAAVDFHRFIASTAIILTVLHSAGHVVNVYLFSISPLSVLSCLFPDLFHDDGSEFPQKYYWWFFQTVPGLTGVLLLLALAIMYVFASHHFRRRSFRGFWLTHHLYIFLYILLIIHGSFALIQMPRFHIFFLVPAIIYVGDKLVSLSRKKVEISVVKAELLPSGVTHLRFQRPQGFEYKSGQWVRIACLALGTTEYHPFTLTSAPHEDTLSLHIRAAGPWTTRLREIYSPPTGDTCARYPKLYLDGPFGEGHQEWHKFEVSVLVGAGIGVTPFASILKDLVFKSSVSCQVFCKKIYFIWVTRTQRQFEWLADIIREVEENDSRDLVSVHIYITQLAEKFDLRTTMLYICERHFQKVLNRSLFTGLRSVTHFGRPPFEPFFNSLQEVHPQVRKIGVFSCGPPGMTKNVEKACQLINKQDRTHFSHHYENF.

The N-terminal stretch at 1-21 (MAVYSAVAWILLFGVLASLGA) is a signal peptide. Residues 22–596 (QNPVSWEVQR…YFKGSGFGFG (575 aa)) are Extracellular-facing. The peroxidase-like; mediates peroxidase activity stretch occupies residues 26 to 593 (SWEVQRFDGW…VRDYFKGSGF (568 aa)). N-linked (GlcNAc...) asparagine glycosylation is found at N94, N342, N354, N461, and N534. Residues 597-617 (LTIGTLCCFPLVSLLSAWIVA) traverse the membrane as a helical segment. Over 618-1044 (RLRMRNFKRL…KRFIENYRRH (427 aa)) the chain is Cytoplasmic. 3 consecutive EF-hand domains span residues 815 to 850 (PQDM…FMKG), 851 to 886 (SPEE…FIEI), and 895 to 930 (QLAE…HDSD). D828, D830, N832, Y834, E839, D864, D866, N868, and E875 together coordinate Ca(2+). Residues 956-1248 (YISQEKICPS…GSFALIQMPR (293 aa)) form an interaction with TXNDC11 region. The chain crosses the membrane as a helical span at residues 1045-1065 (IGCVAVFYTITGALFLERAYY). Residues 1066-1080 (YAFAAHHSGITDTTR) lie on the Extracellular side of the membrane. A helical membrane pass occupies residues 1081-1101 (VGIILSRGTAASISFMFSYIL). In terms of domain architecture, Ferric oxidoreductase spans 1087 to 1269 (RGTAASISFM…YVGDKLVSLS (183 aa)). Residues 1102 to 1136 (LTMCRNLITFLRETFLNRYIPFDAAVDFHRFIAST) are Cytoplasmic-facing. Residues 1137–1157 (AIILTVLHSAGHVVNVYLFSI) traverse the membrane as a helical segment. Topologically, residues 1158-1188 (SPLSVLSCLFPDLFHDDGSEFPQKYYWWFFQ) are extracellular. Residues 1189–1209 (TVPGLTGVLLLLALAIMYVFA) form a helical membrane-spanning segment. The Cytoplasmic portion of the chain corresponds to 1210–1226 (SHHFRRRSFRGFWLTHH). A helical transmembrane segment spans residues 1227-1247 (LYIFLYILLIIHGSFALIQMP). Position 1248 (R1248) is a topological domain, extracellular. The helical transmembrane segment at 1249–1269 (FHIFFLVPAIIYVGDKLVSLS) threads the bilayer. One can recognise an FAD-binding FR-type domain in the interval 1270–1376 (RKKVEISVVK…DGPFGEGHQE (107 aa)). The Cytoplasmic portion of the chain corresponds to 1270 to 1551 (RKKVEISVVK…THFSHHYENF (282 aa)).

It in the N-terminal section; belongs to the peroxidase family. As to quaternary structure, interacts with TXNDC11, TPO and CYBA. In terms of processing, N-glycosylated. As to expression, expressed in thyrocytes (at protein level).

It localises to the apical cell membrane. The enzyme catalyses NADH + O2 + H(+) = H2O2 + NAD(+). It catalyses the reaction NADPH + O2 + H(+) = H2O2 + NADP(+). Its pathway is hormone biosynthesis; thyroid hormone biosynthesis. With respect to regulation, the NADPH oxidase activity is calcium-dependent. Peroxidase activity is inhibited by aminobenzohydrazide. In terms of biological role, generates hydrogen peroxide which is required for the activity of thyroid peroxidase/TPO and lactoperoxidase/LPO. Plays a role in thyroid hormones synthesis and lactoperoxidase-mediated antimicrobial defense at the surface of mucosa. May have its own peroxidase activity through its N-terminal peroxidase-like domain. The polypeptide is Dual oxidase 1 (Duox1) (Rattus norvegicus (Rat)).